A 793-amino-acid polypeptide reads, in one-letter code: Protein smoothened (793 aa).

Positions 1 to 30 (MAAGRPVRGPELAPRRLLQLLLLVLLGGRG) are cleaved as a signal peptide. The Extracellular segment spans residues 31 to 237 (RGAALSGNVT…EAEHQDMHSY (207 aa)). The disordered stretch occupies residues 35 to 61 (LSGNVTGPGPRSAGGSARRNAPVTSPP). N-linked (GlcNAc...) asparagine glycosylation is present at Asn-38. Disulfide bonds link Cys-68–Cys-182, Cys-74–Cys-138, Cys-82–Cys-131, Cys-122–Cys-158, and Cys-151–Cys-173. Positions 69–185 (GRAAHCEPLR…DHFPEGCPNE (117 aa)) constitute an FZ domain. Asp-99 lines the cholesterol pocket. Asn-192 carries an N-linked (GlcNAc...) asparagine glycan. 3 disulfides stabilise this stretch: Cys-197-Cys-217, Cys-221-Cys-299, and Cys-318-Cys-394. Residues 238 to 258 (IAAFGAVTGLCTLFTLATFVA) traverse the membrane as a helical segment. Topologically, residues 259–266 (DWRNSNRY) are cytoplasmic. Residues 267-287 (PAVILFYVNACFFVGSIGWLA) traverse the membrane as a helical segment. Residues 288 to 318 (QFMDGARREIVCRADGTMRFGEPTSSETLSC) are Extracellular-facing. A helical transmembrane segment spans residues 319-339 (VIIFVIVYYALMAGVVWFVVL). Topologically, residues 340–362 (TYAWHTSFKALGTTYQPLSGKTS) are cytoplasmic. Residues 363–383 (YFHLLTWSLPFVLTVAILAVA) traverse the membrane as a helical segment. Over 384–406 (QVDGDSVSGICFVGYKNYRYRAG) the chain is Extracellular. Tyr-398 is a cholesterol binding site. A helical membrane pass occupies residues 407–427 (FVLAPIGLVLIVGGYFLIRGV). At 428-455 (MTLFSIKSNHPGLLSEKAASKINETMLR) the chain is on the cytoplasmic side. Residues 456–476 (LGIFGFLAFGFVLITFSCHFY) traverse the membrane as a helical segment. Residues 477 to 528 (DFFNQAEWERSFRDYVLCQANVTIGLPTKKPIPDCEIKNRPSLLVEKINLFA) are Extracellular-facing. Cys-494 and Cys-511 are disulfide-bonded. N-linked (GlcNAc...) asparagine glycosylation occurs at Asn-497. The helical transmembrane segment at 529 to 549 (MFGTGIAMSTWVWTKATLLIW) threads the bilayer. Positions 542 to 573 (TKATLLIWRRTWCRLTGHSDDEPKRIKKSKMI) are interaction with BBS5 and BBS7. The Cytoplasmic portion of the chain corresponds to 550–793 (RRTWCRLTGH…AELLDADSDF (244 aa)). 3 positions are modified to phosphoserine: Ser-560, Ser-578, and Ser-594. The segment at 574 to 657 (AKAFSKRREL…TPVPPEEQAN (84 aa)) is required for interaction with PRKACA. The interval 585 to 597 (QNPGQELSFSMHT) is interaction with DLG5. A Phosphothreonine modification is found at Thr-597. Ser-599 and Ser-642 each carry phosphoserine. A phosphothreonine mark is found at Thr-644 and Thr-648. Position 666 is a phosphoserine (Ser-666). Basic residues predominate over residues 674–684 (GRKKKRRKRKK). Residues 674–702 (GRKKKRRKRKKEVCPLGPAPELHHSAPVP) are disordered.

It belongs to the G-protein coupled receptor Fz/Smo family. In terms of assembly, homodimer. Interacts (via C-terminus) with protein kinase A catalytic subunit PRKACA; interacts with free PRKACA subunits and the interaction leads to sequestration of PRKACA at the membrane, preventing PRKACA-mediated phosphorylation of GLI transcription factors. Interacts with ARRB2. Interacts with KIF7. Interacts with BBS5 and BBS7; the interactions are indicative for the association of SMO with the BBsome complex to facilitate ciliary localization of SMO. Interacts with DLG5 and SDCBP. Interacts with GAS8/DRC4. Phosphorylation by GRK kinases is required for interaction with protein kinase A catalytic subunit PRKACA. As to expression, in embryo, found in the early neural folds and neural tube, pre-somitic mesoderm and somites, developing limb bud, gut, eye, testes, cartilage, muscle, lung, epiglottis, thymus, tongue, jaw, taste buds, teeth, and skin. In adult, found in multiple tissues including heart, brain, liver, lung, skeletal muscle, kidney and testis.

The protein localises to the cell membrane. It localises to the cell projection. The protein resides in the cilium. In terms of biological role, g protein-coupled receptor which associates with the patched protein (PTCH) to transduce hedgehog protein signaling. Binding of sonic hedgehog (SHH) to its receptor patched prevents inhibition of smoothened (SMO) by patched. When active, SMO binds to and sequesters protein kinase A catalytic subunit PRKACA at the cell membrane, preventing PRKACA-mediated phosphorylation of GLI transcription factors which releases the GLI proteins from PRKACA-mediated inhibition and allows for transcriptional activation of hedgehog pathway target genes. Required for the accumulation of KIF7, GLI2 and GLI3 in the cilia. Interacts with DLG5 at the ciliary base to induce the accumulation of KIF7 and GLI2 at the ciliary tip for GLI2 activation. This chain is Protein smoothened (Smo), found in Rattus norvegicus (Rat).